The chain runs to 294 residues: MSYAYQRFYRGPIEAVIFDWAGTTYDFGSMAPIRAFQNLFAEQEIPITLAEAREPMGTEKREHITRILNMPRVREAWREKYGALASEADIERLYHAFVPMQIEAIRECARPVPGLMETVAWLERRNIKIGANTGYNRDMLDVLTDIAAAQGYRPASNVCATDVPKGRPYPHMSLKNALELGVGDVRACIKVDDTLPGIEEGLAAGMWTVGVTTSGNEVGLSQEDWTALDSASKTVLREQAQERFRRGGAHVIIGSVADLPAAVEYIERWLAQGHGPDTTGLAGVTLTAAGVSLR.

The active-site Nucleophile is the Asp-19. Asp-19 and Ala-21 together coordinate Mg(2+). Lys-60 functions as the Schiff-base intermediate with substrate in the catalytic mechanism. Mg(2+) is bound at residue Asp-193.

The protein belongs to the HAD-like hydrolase superfamily. PhnX family. In terms of assembly, homodimer. It depends on Mg(2+) as a cofactor.

It catalyses the reaction phosphonoacetaldehyde + H2O = acetaldehyde + phosphate + H(+). In terms of biological role, involved in phosphonate degradation. The sequence is that of Phosphonoacetaldehyde hydrolase from Hahella chejuensis (strain KCTC 2396).